Consider the following 675-residue polypeptide: Methionine--tRNA ligase (675 aa).

The short motif at 15 to 25 (PYANGSIHLGH) is the 'HIGH' region element. The Zn(2+) site is built by Cys146, Cys149, Cys159, and Cys162. The 'KMSKS' region signature appears at 332-336 (KMSKS). An ATP-binding site is contributed by Lys335. Residues 573-675 (DFAKVDMRIA…SGAQPGMQVK (103 aa)) form the tRNA-binding domain.

This sequence belongs to the class-I aminoacyl-tRNA synthetase family. MetG type 1 subfamily. As to quaternary structure, homodimer. Requires Zn(2+) as cofactor.

The protein resides in the cytoplasm. The enzyme catalyses tRNA(Met) + L-methionine + ATP = L-methionyl-tRNA(Met) + AMP + diphosphate. Its function is as follows. Is required not only for elongation of protein synthesis but also for the initiation of all mRNA translation through initiator tRNA(fMet) aminoacylation. The sequence is that of Methionine--tRNA ligase from Yersinia pseudotuberculosis serotype O:1b (strain IP 31758).